The sequence spans 319 residues: Acetyl-coenzyme A carboxylase carboxyl transferase subunit alpha (319 aa).

The CoA carboxyltransferase C-terminal domain occupies 35–296 (DLDKELEQLE…KATLLRQLAD (262 aa)).

Belongs to the AccA family. Acetyl-CoA carboxylase is a heterohexamer composed of biotin carboxyl carrier protein (AccB), biotin carboxylase (AccC) and two subunits each of ACCase subunit alpha (AccA) and ACCase subunit beta (AccD).

The protein resides in the cytoplasm. The enzyme catalyses N(6)-carboxybiotinyl-L-lysyl-[protein] + acetyl-CoA = N(6)-biotinyl-L-lysyl-[protein] + malonyl-CoA. It participates in lipid metabolism; malonyl-CoA biosynthesis; malonyl-CoA from acetyl-CoA: step 1/1. Its function is as follows. Component of the acetyl coenzyme A carboxylase (ACC) complex. First, biotin carboxylase catalyzes the carboxylation of biotin on its carrier protein (BCCP) and then the CO(2) group is transferred by the carboxyltransferase to acetyl-CoA to form malonyl-CoA. The sequence is that of Acetyl-coenzyme A carboxylase carboxyl transferase subunit alpha from Vibrio cholerae serotype O1 (strain ATCC 39541 / Classical Ogawa 395 / O395).